Reading from the N-terminus, the 210-residue chain is Ribonuclease HII (210 aa).

The RNase H type-2 domain occupies 16-207 (AIVVGVDEVG…VKKCIISTKN (192 aa)). A divalent metal cation is bound by residues Asp-22, Glu-23, and Asp-116.

This sequence belongs to the RNase HII family. Requires Mn(2+) as cofactor. The cofactor is Mg(2+).

The protein resides in the cytoplasm. The catalysed reaction is Endonucleolytic cleavage to 5'-phosphomonoester.. Functionally, endonuclease that specifically degrades the RNA of RNA-DNA hybrids. The polypeptide is Ribonuclease HII (Anaplasma phagocytophilum (strain HZ)).